Here is a 310-residue protein sequence, read N- to C-terminus: NAD kinase 1 (310 aa).

Asp68 functions as the Proton acceptor in the catalytic mechanism. NAD(+) is bound by residues Asp68 to Gly69, Asn145 to Glu146, Arg156, His175, and Asp177.

This sequence belongs to the NAD kinase family. The cofactor is a divalent metal cation.

It is found in the cytoplasm. It carries out the reaction NAD(+) + ATP = ADP + NADP(+) + H(+). Involved in the regulation of the intracellular balance of NAD and NADP, and is a key enzyme in the biosynthesis of NADP. Catalyzes specifically the phosphorylation on 2'-hydroxyl of the adenosine moiety of NAD to yield NADP. This is NAD kinase 1 from Gloeobacter violaceus (strain ATCC 29082 / PCC 7421).